We begin with the raw amino-acid sequence, 310 residues long: Dehydrodolichyl diphosphate synthase 2 (310 aa).

It belongs to the UPP synthase family. Requires Mg(2+) as cofactor.

The protein operates within protein modification; protein glycosylation. Its function is as follows. Catalyzes cis-prenyl chain elongation to produce the polyprenyl backbone of dolichol, a glycosyl carrier-lipid required for the biosynthesis of several classes of glycoprotein. The protein is Dehydrodolichyl diphosphate synthase 2 of Arabidopsis thaliana (Mouse-ear cress).